Here is a 323-residue protein sequence, read N- to C-terminus: PI-PLC X domain-containing protein 1 (323 aa).

The 177-residue stretch at 30–206 folds into the PI-PLC X-box domain; the sequence is RLWDVPLHHL…QVIVSYEDES (177 aa).

Widely expressed.

The protein localises to the cytoplasm. This is PI-PLC X domain-containing protein 1 (PLCXD1) from Homo sapiens (Human).